Reading from the N-terminus, the 246-residue chain is DNA repair protein RecO (246 aa).

It belongs to the RecO family.

In terms of biological role, involved in DNA repair and RecF pathway recombination. The chain is DNA repair protein RecO from Alkaliphilus metalliredigens (strain QYMF).